The following is a 491-amino-acid chain: Acetyl-coenzyme A carboxylase carboxyl transferase subunit beta, chloroplastic (491 aa).

One can recognise a CoA carboxyltransferase N-terminal domain in the interval 229 to 491; the sequence is LWVQCENCYG…FQLHGFFPLT (263 aa). Residues C233, C236, C252, and C255 each contribute to the Zn(2+) site. Residues 233 to 255 form a C4-type zinc finger; that stretch reads CENCYGLNYKQFFRSRLNICEHC.

Belongs to the AccD/PCCB family. In terms of assembly, acetyl-CoA carboxylase is a heterohexamer composed of biotin carboxyl carrier protein, biotin carboxylase and 2 subunits each of ACCase subunit alpha and ACCase plastid-coded subunit beta (accD). Zn(2+) is required as a cofactor.

The protein resides in the plastid. It is found in the chloroplast stroma. The catalysed reaction is N(6)-carboxybiotinyl-L-lysyl-[protein] + acetyl-CoA = N(6)-biotinyl-L-lysyl-[protein] + malonyl-CoA. It functions in the pathway lipid metabolism; malonyl-CoA biosynthesis; malonyl-CoA from acetyl-CoA: step 1/1. Functionally, component of the acetyl coenzyme A carboxylase (ACC) complex. Biotin carboxylase (BC) catalyzes the carboxylation of biotin on its carrier protein (BCCP) and then the CO(2) group is transferred by the transcarboxylase to acetyl-CoA to form malonyl-CoA. The protein is Acetyl-coenzyme A carboxylase carboxyl transferase subunit beta, chloroplastic of Lemna minor (Common duckweed).